Here is a 124-residue protein sequence, read N- to C-terminus: Succinate dehydrogenase cytochrome b556 subunit (124 aa).

At 1–29 (MTKIKQEIYNKRPTSPHLTIYKPQISSTL) the chain is on the cytoplasmic side. Residues 30-55 (SILHRMTGVALFFVVSILVWWLILSK) traverse the membrane as a helical segment. At 56-67 (YDNNYLQLASCC) the chain is on the periplasmic side. Residues 68-88 (IIKICLVAFSYSWCYHLCNGI) traverse the membrane as a helical segment. Residue His83 coordinates heme. The Cytoplasmic segment spans residues 89-103 (RHLFWDIGYGFSIKA). The chain crosses the membrane as a helical span at residues 104–124 (VNITGWCVVVCSILLTMLLWV).

This sequence belongs to the cytochrome b560 family. As to quaternary structure, part of an enzyme complex containing four subunits: a flavoprotein, an iron-sulfur protein, plus two membrane-anchoring proteins, SdhC and SdhD. The complex can form homotrimers. The cofactor is heme.

The protein localises to the cell inner membrane. It functions in the pathway carbohydrate metabolism; tricarboxylic acid cycle. Membrane-anchoring subunit of succinate dehydrogenase (SDH). This chain is Succinate dehydrogenase cytochrome b556 subunit (sdhC), found in Rickettsia prowazekii (strain Madrid E).